A 209-amino-acid polypeptide reads, in one-letter code: Putative amino acid efflux protein YcgF (209 aa).

6 helical membrane-spanning segments follow: residues 1-21 (MNIF…VGPV), 39-59 (IFGL…YFGL), 62-82 (FLTA…VLTY), 110-130 (FASG…WLGI), 147-167 (LLIY…CMAI), and 184-204 (LTGI…YQGI).

This sequence belongs to the Rht family.

The protein resides in the cell membrane. This chain is Putative amino acid efflux protein YcgF (ycgF), found in Bacillus subtilis (strain 168).